We begin with the raw amino-acid sequence, 361 residues long: Uroporphyrinogen decarboxylase (361 aa).

Substrate-binding positions include 27 to 31 (RQAGR), aspartate 77, tyrosine 154, threonine 209, and histidine 327.

It belongs to the uroporphyrinogen decarboxylase family. In terms of assembly, homodimer.

The protein resides in the cytoplasm. The enzyme catalyses uroporphyrinogen III + 4 H(+) = coproporphyrinogen III + 4 CO2. Its pathway is porphyrin-containing compound metabolism; protoporphyrin-IX biosynthesis; coproporphyrinogen-III from 5-aminolevulinate: step 4/4. Its function is as follows. Catalyzes the decarboxylation of four acetate groups of uroporphyrinogen-III to yield coproporphyrinogen-III. The polypeptide is Uroporphyrinogen decarboxylase (Coxiella burnetii (strain RSA 331 / Henzerling II)).